The primary structure comprises 247 residues: MKLNISYPATGCQKLIEVDDEKKLRPFYDKRISAELSADCLGDEWKGYVVRISGGNDKQGFPMKQGVLTATRVRLLLDKNHSCYRPRRTGERKRKSVRGCIVDSNLSVLSLVIIKKGEQDIPGLTDKTIPRRLGPKRASKIRKLFNLSKEDDVRQYVVRRPLPERDGKKAKSKAPKIQRLVTPVVLQRKRARMALKKKRVTKKREDHAEYTKLLAQRMKEAKERKMERKRSNSRSKGDSIRESTSKK.

The segment at 194–247 is disordered; that stretch reads ALKKKRVTKKREDHAEYTKLLAQRMKEAKERKMERKRSNSRSKGDSIRESTSKK. A compositionally biased stretch (basic and acidic residues) spans 217–247; that stretch reads RMKEAKERKMERKRSNSRSKGDSIRESTSKK.

This sequence belongs to the eukaryotic ribosomal protein eS6 family. Ribosomal protein S6 is the major substrate of protein kinases in eukaryote ribosomes.

Its function is as follows. Component of the 40S small ribosomal subunit. Plays an important role in controlling cell growth and proliferation through the selective translation of particular classes of mRNA. This is Small ribosomal subunit protein eS6 (RPS6) from Aplysia californica (California sea hare).